A 99-amino-acid chain; its full sequence is Large ribosomal subunit protein uL23 (99 aa).

As to quaternary structure, contacts protein L29, and trigger factor when it is bound to the ribosome. Part of the 50S ribosomal subunit.

One of the early assembly proteins it binds 23S rRNA. One of the proteins that surrounds the polypeptide exit tunnel on the outside of the ribosome. Forms the main docking site for trigger factor binding to the ribosome. This chain is Large ribosomal subunit protein uL23, found in Rhodopseudomonas palustris (strain ATCC BAA-98 / CGA009).